The following is a 500-amino-acid chain: Glycerol kinase (500 aa).

T11 is a binding site for ADP. The ATP site is built by T11, T12, and S13. T11 is a binding site for sn-glycerol 3-phosphate. R15 contributes to the ADP binding site. Sn-glycerol 3-phosphate is bound by residues R81, E82, Y133, and D242. Residues R81, E82, Y133, D242, and Q243 each coordinate glycerol. Positions 264 and 307 each coordinate ADP. Positions 264, 307, 311, and 411 each coordinate ATP. ADP is bound at residue G411.

It belongs to the FGGY kinase family.

It carries out the reaction glycerol + ATP = sn-glycerol 3-phosphate + ADP + H(+). It functions in the pathway polyol metabolism; glycerol degradation via glycerol kinase pathway; sn-glycerol 3-phosphate from glycerol: step 1/1. Inhibited by fructose 1,6-bisphosphate (FBP). Its function is as follows. Key enzyme in the regulation of glycerol uptake and metabolism. Catalyzes the phosphorylation of glycerol to yield sn-glycerol 3-phosphate. The protein is Glycerol kinase of Bradyrhizobium diazoefficiens (strain JCM 10833 / BCRC 13528 / IAM 13628 / NBRC 14792 / USDA 110).